The following is a 496-amino-acid chain: Glycerol kinase (496 aa).

Residue Thr-12 participates in ADP binding. Residues Thr-12, Thr-13, and Ser-14 each coordinate ATP. A sn-glycerol 3-phosphate-binding site is contributed by Thr-12. Residue Arg-16 participates in ADP binding. Residues Arg-82, Glu-83, and Tyr-134 each coordinate sn-glycerol 3-phosphate. Positions 82, 83, and 134 each coordinate glycerol. A Phosphohistidine; by HPr modification is found at His-230. Residue Asp-244 participates in sn-glycerol 3-phosphate binding. Glycerol contacts are provided by Asp-244 and Gln-245. Positions 266 and 309 each coordinate ADP. Positions 266, 309, 313, and 410 each coordinate ATP. ADP is bound by residues Gly-410 and Asn-414.

Belongs to the FGGY kinase family. In terms of assembly, homotetramer and homodimer (in equilibrium). The phosphoenolpyruvate-dependent sugar phosphotransferase system (PTS), including enzyme I, and histidine-containing protein (HPr) are required for the phosphorylation, which leads to the activation of the enzyme.

The catalysed reaction is glycerol + ATP = sn-glycerol 3-phosphate + ADP + H(+). It participates in polyol metabolism; glycerol degradation via glycerol kinase pathway; sn-glycerol 3-phosphate from glycerol: step 1/1. Activated by phosphorylation and inhibited by fructose 1,6-bisphosphate (FBP). Functionally, key enzyme in the regulation of glycerol uptake and metabolism. Catalyzes the phosphorylation of glycerol to yield sn-glycerol 3-phosphate. This is Glycerol kinase from Bacillus cereus (strain ATCC 14579 / DSM 31 / CCUG 7414 / JCM 2152 / NBRC 15305 / NCIMB 9373 / NCTC 2599 / NRRL B-3711).